The chain runs to 272 residues: Energy-coupling factor transporter ATP-binding protein EcfA1 (272 aa).

One can recognise an ABC transporter domain in the interval Ile2 to Asp237. Gly37–Ser44 contributes to the ATP binding site.

The protein belongs to the ABC transporter superfamily. Energy-coupling factor EcfA family. As to quaternary structure, forms a stable energy-coupling factor (ECF) transporter complex composed of 2 membrane-embedded substrate-binding proteins (S component), 2 ATP-binding proteins (A component) and 2 transmembrane proteins (T component).

It localises to the cell membrane. In terms of biological role, ATP-binding (A) component of a common energy-coupling factor (ECF) ABC-transporter complex. Unlike classic ABC transporters this ECF transporter provides the energy necessary to transport a number of different substrates. In Mesomycoplasma hyopneumoniae (strain 7448) (Mycoplasma hyopneumoniae), this protein is Energy-coupling factor transporter ATP-binding protein EcfA1.